The following is an 82-amino-acid chain: Small ribosomal subunit protein bS18 (82 aa).

The disordered stretch occupies residues 1–20; it reads MSEASSAPVRRPFHRRRKTC.

The protein belongs to the bacterial ribosomal protein bS18 family. Part of the 30S ribosomal subunit. Forms a tight heterodimer with protein bS6.

Binds as a heterodimer with protein bS6 to the central domain of the 16S rRNA, where it helps stabilize the platform of the 30S subunit. The protein is Small ribosomal subunit protein bS18 of Rhizobium etli (strain CIAT 652).